A 513-amino-acid chain; its full sequence is Glutamate--tRNA ligase 2 (513 aa).

The 'HIGH' region signature appears at 11–21 (PSPSGFLHIGS). Residues 240–244 (KLSKR) carry the 'KMSKS' region motif. Lys-243 serves as a coordination point for ATP.

This sequence belongs to the class-I aminoacyl-tRNA synthetase family. Glutamate--tRNA ligase type 1 subfamily. In terms of assembly, monomer.

It localises to the cytoplasm. It catalyses the reaction tRNA(Glu) + L-glutamate + ATP = L-glutamyl-tRNA(Glu) + AMP + diphosphate. Its function is as follows. Catalyzes the attachment of glutamate to tRNA(Glu) in a two-step reaction: glutamate is first activated by ATP to form Glu-AMP and then transferred to the acceptor end of tRNA(Glu). This Rickettsia massiliae (strain Mtu5) protein is Glutamate--tRNA ligase 2.